Here is a 358-residue protein sequence, read N- to C-terminus: Holliday junction branch migration complex subunit RuvB (358 aa).

Positions 1–24 are disordered; the sequence is MAIKRSHNSPPATEENLLTPNPTI. Residues 8–22 are compositionally biased toward polar residues; sequence NSPPATEENLLTPNP. Residues 13 to 195 form a large ATPase domain (RuvB-L) region; it reads TEENLLTPNP…FGLIQRLRFY (183 aa). ATP is bound by residues Ile-34, Arg-35, Gly-76, Lys-79, Thr-80, Thr-81, 142–144, Arg-185, Tyr-195, and Arg-232; that span reads EDY. Thr-80 provides a ligand contact to Mg(2+). The segment at 196–266 is small ATPAse domain (RuvB-S); the sequence is AVEELTAIIL…LAAEGLNQLN (71 aa). A head domain (RuvB-H) region spans residues 269–358; that stretch reads SMGLDWTDRL…KDRSLPLFEF (90 aa). Residues Arg-324 and Arg-329 each contribute to the DNA site.

It belongs to the RuvB family. In terms of assembly, homohexamer. Forms an RuvA(8)-RuvB(12)-Holliday junction (HJ) complex. HJ DNA is sandwiched between 2 RuvA tetramers; dsDNA enters through RuvA and exits via RuvB. An RuvB hexamer assembles on each DNA strand where it exits the tetramer. Each RuvB hexamer is contacted by two RuvA subunits (via domain III) on 2 adjacent RuvB subunits; this complex drives branch migration. In the full resolvosome a probable DNA-RuvA(4)-RuvB(12)-RuvC(2) complex forms which resolves the HJ.

Its subcellular location is the cytoplasm. The catalysed reaction is ATP + H2O = ADP + phosphate + H(+). In terms of biological role, the RuvA-RuvB-RuvC complex processes Holliday junction (HJ) DNA during genetic recombination and DNA repair, while the RuvA-RuvB complex plays an important role in the rescue of blocked DNA replication forks via replication fork reversal (RFR). RuvA specifically binds to HJ cruciform DNA, conferring on it an open structure. The RuvB hexamer acts as an ATP-dependent pump, pulling dsDNA into and through the RuvAB complex. RuvB forms 2 homohexamers on either side of HJ DNA bound by 1 or 2 RuvA tetramers; 4 subunits per hexamer contact DNA at a time. Coordinated motions by a converter formed by DNA-disengaged RuvB subunits stimulates ATP hydrolysis and nucleotide exchange. Immobilization of the converter enables RuvB to convert the ATP-contained energy into a lever motion, pulling 2 nucleotides of DNA out of the RuvA tetramer per ATP hydrolyzed, thus driving DNA branch migration. The RuvB motors rotate together with the DNA substrate, which together with the progressing nucleotide cycle form the mechanistic basis for DNA recombination by continuous HJ branch migration. Branch migration allows RuvC to scan DNA until it finds its consensus sequence, where it cleaves and resolves cruciform DNA. This is Holliday junction branch migration complex subunit RuvB from Microcystis aeruginosa (strain NIES-843 / IAM M-2473).